The chain runs to 395 residues: Putative 8-amino-7-oxononanoate synthase (395 aa).

R23 lines the substrate pocket. 110–111 (GY) contributes to the pyridoxal 5'-phosphate binding site. H135 is a substrate binding site. Pyridoxal 5'-phosphate-binding positions include S182, 207–210 (DEAH), and 239–242 (TFSK). K242 is subject to N6-(pyridoxal phosphate)lysine. T356 provides a ligand contact to substrate.

It belongs to the class-II pyridoxal-phosphate-dependent aminotransferase family. BioF subfamily. Homodimer. The cofactor is pyridoxal 5'-phosphate.

The catalysed reaction is 6-carboxyhexanoyl-[ACP] + L-alanine + H(+) = (8S)-8-amino-7-oxononanoate + holo-[ACP] + CO2. It functions in the pathway cofactor biosynthesis; biotin biosynthesis. Its function is as follows. Catalyzes the decarboxylative condensation of pimeloyl-[acyl-carrier protein] and L-alanine to produce 8-amino-7-oxononanoate (AON), [acyl-carrier protein], and carbon dioxide. The chain is Putative 8-amino-7-oxononanoate synthase (bioF) from Bacillus cereus (strain B4264).